The sequence spans 287 residues: Cell division protein ZipA (287 aa).

Methionine 1 is a topological domain (periplasmic). A helical membrane pass occupies residues glutamate 2 to phenylalanine 22. Over aspartate 23–arginine 287 the chain is Cytoplasmic. The tract at residues leucine 70 to proline 143 is disordered.

The protein belongs to the ZipA family. In terms of assembly, interacts with FtsZ via their C-terminal domains.

The protein resides in the cell inner membrane. Essential cell division protein that stabilizes the FtsZ protofilaments by cross-linking them and that serves as a cytoplasmic membrane anchor for the Z ring. Also required for the recruitment to the septal ring of downstream cell division proteins. In Pseudomonas fluorescens (strain SBW25), this protein is Cell division protein ZipA.